The chain runs to 214 residues: MTHITGTLYIISAPSGAGKTSLVKALMDAQQEPQHGAQAKIRVSVSHTTRAMRPGEVDGVNYNFVDRAEFVRMIEHGDFLEQAEVFGNLYGTSQSHLQQTLDEGHDLILEIDWQGARQVRTQMPQARSIFILPPSQQALRQRLTNRGQDSDEIIEARMREAVSEMSHYNEYEYVVVNDDFAGALEDLKSIFRANRLTQQHQQEQYSELFQELLA.

The region spanning 6 to 192 (GTLYIISAPS…ALEDLKSIFR (187 aa)) is the Guanylate kinase-like domain. An ATP-binding site is contributed by 13 to 20 (APSGAGKT).

This sequence belongs to the guanylate kinase family.

It localises to the cytoplasm. It catalyses the reaction GMP + ATP = GDP + ADP. Essential for recycling GMP and indirectly, cGMP. In Pseudomonas syringae pv. tomato (strain ATCC BAA-871 / DC3000), this protein is Guanylate kinase.